The primary structure comprises 346 residues: Cyclin-dependent kinase 20 (346 aa).

Positions 4–288 (YCILGRIGEG…ASKALLHQYF (285 aa)) constitute a Protein kinase domain. ATP contacts are provided by residues 10-18 (IGEGAHGIV) and K33. The Proton acceptor role is filled by D127.

This sequence belongs to the protein kinase superfamily. CMGC Ser/Thr protein kinase family. CDC2/CDKX subfamily. As to quaternary structure, monomer. Interacts with TBC1D32. Interacts with MAK.

Its subcellular location is the nucleus. It localises to the cytoplasm. The protein resides in the cell projection. The protein localises to the cilium. It catalyses the reaction L-seryl-[protein] + ATP = O-phospho-L-seryl-[protein] + ADP + H(+). The enzyme catalyses L-threonyl-[protein] + ATP = O-phospho-L-threonyl-[protein] + ADP + H(+). In terms of biological role, required for high-level Shh responses in the developing neural tube. Together with TBC1D32, controls the structure of the primary cilium by coordinating assembly of the ciliary membrane and axoneme, allowing GLI2 to be properly activated in response to SHH signaling. Involved in cell growth. Activates CDK2, a kinase involved in the control of the cell cycle, by phosphorylating residue 'Thr-160'. This Homo sapiens (Human) protein is Cyclin-dependent kinase 20 (CDK20).